We begin with the raw amino-acid sequence, 180 residues long: ADP-ribosylation factor 1 (180 aa).

Residue Gly-2 is the site of N-myristoyl glycine attachment. GTP contacts are provided by residues 24–31, 67–71, and 126–129; these read GLDAAGKT, DVGGQ, and NKQD.

This sequence belongs to the small GTPase superfamily. Arf family.

The protein localises to the golgi apparatus. It catalyses the reaction GTP + H2O = GDP + phosphate + H(+). Its function is as follows. GTP-binding protein involved in protein trafficking; may modulate vesicle budding and uncoating within the Golgi apparatus. The polypeptide is ADP-ribosylation factor 1 (arf1) (Schizosaccharomyces pombe (strain 972 / ATCC 24843) (Fission yeast)).